Consider the following 197-residue polypeptide: Female-specific protein transformer (197 aa).

Composition is skewed to basic and acidic residues over residues 1 to 17 and 24 to 39; these read MKMD…DSRG and RERE…DSRK. 2 disordered regions span residues 1–136 and 158–197; these read MKMD…PKII and GYQR…RPPY. Basic residues-rich tracts occupy residues 58-75 and 84-127; these read RRLR…RSRS and SRHR…RSPH. Residues 163 to 172 show a composition bias toward pro residues; it reads PRPPPFPPAP.

The protein resides in the nucleus speckle. Its function is as follows. Member of the regulatory pathway controlling female somatic sexual differentiation, regulated by Sxl. Activates dsx female-specific splicing by promoting the formation of a splicing enhancer complex which consists of tra, tra2 and sr proteins. Together with tra-2, plays a role in switching fru splicing from the male-specific pattern to the female-specific pattern through activation of the female-specific fru 5'-splice site. No known function in males. This is Female-specific protein transformer (tra) from Drosophila melanogaster (Fruit fly).